We begin with the raw amino-acid sequence, 45 residues long: Mu-conotoxin-like Cal 12.1.2c (45 aa).

Cystine bridges form between cysteine 3–cysteine 16, cysteine 11–cysteine 28, cysteine 18–cysteine 33, and cysteine 27–cysteine 39. The residue at position 23 (proline 23) is a 4-hydroxyproline. A 6'-bromotryptophan mark is found at tryptophan 37 and tryptophan 38. Proline 40 carries the 4-hydroxyproline modification. Tryptophan 44 carries the post-translational modification 6'-bromotryptophan.

Expressed by the venom duct.

The protein resides in the secreted. In terms of biological role, mu-conotoxins block voltage-gated sodium channels. This toxin reversibly blocks voltage-gated sodium channel in cephalopods, with no alteration in the voltage dependence of sodium conductance or on the kinetics of inactivation. This Californiconus californicus (California cone) protein is Mu-conotoxin-like Cal 12.1.2c.